The primary structure comprises 494 residues: Probable cytosol aminopeptidase (494 aa).

The Mn(2+) site is built by Lys-260 and Asp-265. Residue Lys-272 is part of the active site. Residues Asp-283, Asp-342, and Glu-344 each coordinate Mn(2+). The active site involves Arg-346.

This sequence belongs to the peptidase M17 family. Mn(2+) serves as cofactor.

It localises to the cytoplasm. The catalysed reaction is Release of an N-terminal amino acid, Xaa-|-Yaa-, in which Xaa is preferably Leu, but may be other amino acids including Pro although not Arg or Lys, and Yaa may be Pro. Amino acid amides and methyl esters are also readily hydrolyzed, but rates on arylamides are exceedingly low.. It catalyses the reaction Release of an N-terminal amino acid, preferentially leucine, but not glutamic or aspartic acids.. Its function is as follows. Presumably involved in the processing and regular turnover of intracellular proteins. Catalyzes the removal of unsubstituted N-terminal amino acids from various peptides. The polypeptide is Probable cytosol aminopeptidase (Bacillus cereus (strain AH187)).